The sequence spans 220 residues: Putative threonylcarbamoyl-AMP synthase (220 aa).

Residues 17–202 (ARGIASAVAA…TPRILRAGPV (186 aa)) form the YrdC-like domain.

Belongs to the SUA5 family.

The protein localises to the cytoplasm. The enzyme catalyses L-threonine + hydrogencarbonate + ATP = L-threonylcarbamoyladenylate + diphosphate + H2O. In terms of biological role, required for the formation of a threonylcarbamoyl group on adenosine at position 37 (t(6)A37) in tRNAs that read codons beginning with adenine. Catalyzes the conversion of L-threonine, HCO(3)(-)/CO(2) and ATP to give threonylcarbamoyl-AMP (TC-AMP) as the acyladenylate intermediate, with the release of diphosphate. The protein is Putative threonylcarbamoyl-AMP synthase of Mycobacterium leprae (strain TN).